Here is a 145-residue protein sequence, read N- to C-terminus: MIALIQRVTRASVTVEDEVTGEIGPGLLVLLGVEKDDDEQKANRLCERVLGYRIFSDADGKMNLNVQQAGGSVLVVSQFTLAADTDRGMRPGFSKGAAPDRAEALYDYFVERCRQQEMNTQTGRFAADMQVSLVNDGPVTFWLQV.

Residues 137 to 138 (GP) carry the Gly-cisPro motif, important for rejection of L-amino acids motif.

Belongs to the DTD family. Homodimer.

The protein resides in the cytoplasm. It catalyses the reaction glycyl-tRNA(Ala) + H2O = tRNA(Ala) + glycine + H(+). The catalysed reaction is a D-aminoacyl-tRNA + H2O = a tRNA + a D-alpha-amino acid + H(+). In terms of biological role, an aminoacyl-tRNA editing enzyme that deacylates mischarged D-aminoacyl-tRNAs. Also deacylates mischarged glycyl-tRNA(Ala), protecting cells against glycine mischarging by AlaRS. Acts via tRNA-based rather than protein-based catalysis; rejects L-amino acids rather than detecting D-amino acids in the active site. By recycling D-aminoacyl-tRNA to D-amino acids and free tRNA molecules, this enzyme counteracts the toxicity associated with the formation of D-aminoacyl-tRNA entities in vivo and helps enforce protein L-homochirality. The polypeptide is D-aminoacyl-tRNA deacylase (Enterobacter sp. (strain 638)).